Consider the following 905-residue polypeptide: Nitrate reductase [NADPH] (905 aa).

The segment at 1–42 (METSTTTTLLQQERIPENSEPISTHIHTHSLPPTPPGTAKPS) is disordered. Position 179 (cysteine 179) interacts with Mo-molybdopterin. The region spanning 546-621 (NRKITIEELK…LPTYHIGTLD (76 aa)) is the Cytochrome b5 heme-binding domain. Heme contacts are provided by histidine 581 and histidine 604. Residues 648-759 (KTWSKAILDK…KGPTGKFVYH (112 aa)) enclose the FAD-binding FR-type domain. Residues 702-705 (RSYT), 719-723 (LIKIY), 733-735 (VMT), serine 783, and threonine 786 each bind FAD. Residue 875 to 884 (LLLVCGPPPM) coordinates NADP(+).

This sequence belongs to the nitrate reductase family. Homodimer. The cofactor is FAD. Requires heme as cofactor. Mo-molybdopterin is required as a cofactor.

It carries out the reaction nitrite + NADP(+) + H2O = nitrate + NADPH + H(+). Its function is as follows. Nitrate reductase is a key enzyme involved in the first step of nitrate assimilation in plants, fungi and bacteria. The sequence is that of Nitrate reductase [NADPH] (NIA) from Fusarium oxysporum (Fusarium vascular wilt).